Consider the following 142-residue polypeptide: Large ribosomal subunit protein uL13 (142 aa).

Belongs to the universal ribosomal protein uL13 family. Part of the 50S ribosomal subunit.

Functionally, this protein is one of the early assembly proteins of the 50S ribosomal subunit, although it is not seen to bind rRNA by itself. It is important during the early stages of 50S assembly. The sequence is that of Large ribosomal subunit protein uL13 from Photorhabdus laumondii subsp. laumondii (strain DSM 15139 / CIP 105565 / TT01) (Photorhabdus luminescens subsp. laumondii).